Here is a 617-residue protein sequence, read N- to C-terminus: Proline--tRNA ligase (617 aa).

The protein belongs to the class-II aminoacyl-tRNA synthetase family. ProS type 1 subfamily. Homodimer.

Its subcellular location is the cytoplasm. The enzyme catalyses tRNA(Pro) + L-proline + ATP = L-prolyl-tRNA(Pro) + AMP + diphosphate. Its function is as follows. Catalyzes the attachment of proline to tRNA(Pro) in a two-step reaction: proline is first activated by ATP to form Pro-AMP and then transferred to the acceptor end of tRNA(Pro). As ProRS can inadvertently accommodate and process non-cognate amino acids such as alanine and cysteine, to avoid such errors it has two additional distinct editing activities against alanine. One activity is designated as 'pretransfer' editing and involves the tRNA(Pro)-independent hydrolysis of activated Ala-AMP. The other activity is designated 'posttransfer' editing and involves deacylation of mischarged Ala-tRNA(Pro). The misacylated Cys-tRNA(Pro) is not edited by ProRS. This Streptococcus pneumoniae serotype 19F (strain G54) protein is Proline--tRNA ligase.